Consider the following 188-residue polypeptide: Probable nicotinate-nucleotide adenylyltransferase (188 aa).

This sequence belongs to the NadD family.

It carries out the reaction nicotinate beta-D-ribonucleotide + ATP + H(+) = deamido-NAD(+) + diphosphate. The protein operates within cofactor biosynthesis; NAD(+) biosynthesis; deamido-NAD(+) from nicotinate D-ribonucleotide: step 1/1. In terms of biological role, catalyzes the reversible adenylation of nicotinate mononucleotide (NaMN) to nicotinic acid adenine dinucleotide (NaAD). The chain is Probable nicotinate-nucleotide adenylyltransferase from Salinispora arenicola (strain CNS-205).